Consider the following 62-residue polypeptide: Protein translocase subunit SecE (62 aa).

Residues 40 to 60 traverse the membrane as a helical segment; that stretch reads LLVLAVVGVLAYIIQLALTLI.

It belongs to the SecE/SEC61-gamma family. As to quaternary structure, component of the Sec protein translocase complex. Heterotrimer consisting of SecY (alpha), SecG (beta) and SecE (gamma) subunits. The heterotrimers can form oligomers, although 1 heterotrimer is thought to be able to translocate proteins. Interacts with the ribosome. May interact with SecDF, and other proteins may be involved.

It localises to the cell membrane. Its function is as follows. Essential subunit of the Sec protein translocation channel SecYEG. Clamps together the 2 halves of SecY. May contact the channel plug during translocation. The protein is Protein translocase subunit SecE of Saccharolobus solfataricus (strain ATCC 35092 / DSM 1617 / JCM 11322 / P2) (Sulfolobus solfataricus).